The chain runs to 556 residues: Formate--tetrahydrofolate ligase (556 aa).

65–72 (TPAGEGKS) is an ATP binding site.

Belongs to the formate--tetrahydrofolate ligase family.

The catalysed reaction is (6S)-5,6,7,8-tetrahydrofolate + formate + ATP = (6R)-10-formyltetrahydrofolate + ADP + phosphate. The protein operates within one-carbon metabolism; tetrahydrofolate interconversion. The sequence is that of Formate--tetrahydrofolate ligase from Clostridium botulinum (strain Alaska E43 / Type E3).